The following is a 263-amino-acid chain: Malonyl-[acyl-carrier protein] O-methyltransferase (263 aa).

This sequence belongs to the methyltransferase superfamily.

The enzyme catalyses malonyl-[ACP] + S-adenosyl-L-methionine = malonyl-[ACP] methyl ester + S-adenosyl-L-homocysteine. The protein operates within cofactor biosynthesis; biotin biosynthesis. Converts the free carboxyl group of a malonyl-thioester to its methyl ester by transfer of a methyl group from S-adenosyl-L-methionine (SAM). It allows to synthesize pimeloyl-ACP via the fatty acid synthetic pathway. This is Malonyl-[acyl-carrier protein] O-methyltransferase from Chlorobium luteolum (strain DSM 273 / BCRC 81028 / 2530) (Pelodictyon luteolum).